The primary structure comprises 185 residues: Elongation factor P (185 aa).

Belongs to the elongation factor P family.

It is found in the cytoplasm. Its pathway is protein biosynthesis; polypeptide chain elongation. Involved in peptide bond synthesis. Stimulates efficient translation and peptide-bond synthesis on native or reconstituted 70S ribosomes in vitro. Probably functions indirectly by altering the affinity of the ribosome for aminoacyl-tRNA, thus increasing their reactivity as acceptors for peptidyl transferase. This Burkholderia mallei (strain NCTC 10247) protein is Elongation factor P.